The primary structure comprises 395 residues: Putative 8-amino-7-oxononanoate synthase (395 aa).

Substrate is bound at residue Arg23. 110 to 111 (GY) serves as a coordination point for pyridoxal 5'-phosphate. Position 135 (His135) interacts with substrate. Pyridoxal 5'-phosphate contacts are provided by residues Ser182, 207 to 210 (DEAH), and 239 to 242 (TFSK). Lys242 is modified (N6-(pyridoxal phosphate)lysine). Position 356 (Thr356) interacts with substrate.

This sequence belongs to the class-II pyridoxal-phosphate-dependent aminotransferase family. BioF subfamily. As to quaternary structure, homodimer. Pyridoxal 5'-phosphate serves as cofactor.

The catalysed reaction is 6-carboxyhexanoyl-[ACP] + L-alanine + H(+) = (8S)-8-amino-7-oxononanoate + holo-[ACP] + CO2. It participates in cofactor biosynthesis; biotin biosynthesis. Its function is as follows. Catalyzes the decarboxylative condensation of pimeloyl-[acyl-carrier protein] and L-alanine to produce 8-amino-7-oxononanoate (AON), [acyl-carrier protein], and carbon dioxide. The sequence is that of Putative 8-amino-7-oxononanoate synthase (bioF) from Bacillus cereus (strain G9842).